The primary structure comprises 394 residues: Phosphoglycerate kinase (394 aa).

Residues 21–23, R36, 59–62, R118, and R151 contribute to the substrate site; these read DFN and HLGR. S183 bears the Phosphoserine mark. K201 is an ATP binding site. T299 bears the Phosphothreonine mark. Residues E323 and 350–353 contribute to the ATP site; that span reads GGDS.

The protein belongs to the phosphoglycerate kinase family. In terms of assembly, monomer.

It localises to the cytoplasm. It carries out the reaction (2R)-3-phosphoglycerate + ATP = (2R)-3-phospho-glyceroyl phosphate + ADP. Its pathway is carbohydrate degradation; glycolysis; pyruvate from D-glyceraldehyde 3-phosphate: step 2/5. In Geobacillus kaustophilus (strain HTA426), this protein is Phosphoglycerate kinase.